Consider the following 465-residue polypeptide: Iron transporter FTH1 (465 aa).

The Vacuolar segment spans residues 1–11 (MAFEDYFSFQI). A helical membrane pass occupies residues 12-32 (FFIFLRESLEIVVIVSILLTI). The Cytoplasmic segment spans residues 33–135 (VKQGLSVEDD…LYQKLKIQIL (103 aa)). Residues 44 to 66 (PFEGSSSSAGLPSPNTNTNADST) are disordered. Residues 46-66 (EGSSSSAGLPSPNTNTNADST) are compositionally biased toward polar residues. Residues 136–156 (AGGAFGLLLCMLIGGAFVSIF) form a helical membrane-spanning segment. Over 157-170 (YHIGTDLWTLSEHY) the chain is Vacuolar. Residues 171 to 191 (YEGVLSLVASVIISVMGLFFL) form a helical membrane-spanning segment. Residues 192–289 (RMGKLREKFR…FFFRYSSSLS (98 aa)) lie on the Cytoplasmic side of the membrane. The helical transmembrane segment at 290–310 (LKICLVVATCFLYLIAAGLFS) threads the bilayer. Residues 311–358 (KGVWQLELQDYVNKCNGQDMSEVGNGPGSYDISRSVWHVNCCNGEKDG) lie on the Vacuolar side of the membrane. The helical transmembrane segment at 359–379 (GWMIFTAIFGWTNSATVGSVI) threads the bilayer. At 380-465 (SYNAYWLVLI…LIIDSSGSAN (86 aa)) the chain is on the cytoplasmic side. Residues 433 to 465 (TSELNSSTSEPDSQRRSKDSSVPLIIDSSGSAN) form a disordered region. A phosphoserine mark is found at Ser449 and Ser453.

This sequence belongs to the oxidase-dependent Fe transporter (OFeT) (TC 9.A.10.1) family. Interacts with FET5.

The protein localises to the vacuole membrane. Its function is as follows. High affinity iron transporter probably involved in transport of intravacuolar stores of iron. This Saccharomyces cerevisiae (strain ATCC 204508 / S288c) (Baker's yeast) protein is Iron transporter FTH1 (FTH1).